Reading from the N-terminus, the 178-residue chain is Thioredoxin F1, chloroplastic (178 aa).

The segment at 1-22 (MPLSLRLSPSPTALSPTTGGFG) is disordered. Residues 1–57 (MPLSLRLSPSPTALSPTTGGFGPSRKQCRIPYSGVPTTKIGFCSLDSRKRGDSSVVR) constitute a chloroplast transit peptide. Polar residues predominate over residues 7 to 18 (LSPSPTALSPTT). A Thioredoxin domain is found at 58–174 (CSLETVNVSV…LVAAIETARS (117 aa)). Catalysis depends on nucleophile residues cysteine 99 and cysteine 102. The cysteines at positions 99 and 102 are disulfide-linked. Position 126 is an S-glutathionyl cysteine; transient (cysteine 126).

The protein belongs to the thioredoxin family. Plant F-type subfamily. Post-translationally, glutathionylation at Cys-126 decreases its ability to be reduced by ferredoxin-thioredoxin reductase and reduces its efficiency in activating target chloroplastic enzymes.

The protein localises to the plastid. It localises to the chloroplast stroma. In terms of biological role, thiol-disulfide oxidoreductase involved in the redox regulation of enzymes of both reductive pentose phosphate pathway (Calvin-Benson cycle) and oxidative pentose phosphate pathway. Under light or reducing conditions, activates in chloroplast the glyceraldehyde-3-phosphate dehydrogenase, the phosphoribulokinase and the fructose-1,6-bisphosphate phosphatase, and inhibits the glucose-6-phosphate dehydrogenase. The chain is Thioredoxin F1, chloroplastic from Arabidopsis thaliana (Mouse-ear cress).